The primary structure comprises 303 residues: Pseudouridine-5'-phosphate glycosidase (303 aa).

The active-site Proton donor is the Glu24. Residues Lys85 and Val105 each coordinate substrate. Asp137 contributes to the Mn(2+) binding site. 139–141 (SAD) serves as a coordination point for substrate. The active-site Nucleophile is Lys158.

Belongs to the pseudouridine-5'-phosphate glycosidase family. As to quaternary structure, homotrimer. It depends on Mn(2+) as a cofactor.

The enzyme catalyses D-ribose 5-phosphate + uracil = psi-UMP + H2O. Its function is as follows. Catalyzes the reversible cleavage of pseudouridine 5'-phosphate (PsiMP) to ribose 5-phosphate and uracil. Functions biologically in the cleavage direction, as part of a pseudouridine degradation pathway. This chain is Pseudouridine-5'-phosphate glycosidase, found in Herpetosiphon aurantiacus (strain ATCC 23779 / DSM 785 / 114-95).